The sequence spans 373 residues: Flagellar P-ring protein (373 aa).

Positions 1–26 (MRLLFRFLTLVAVLAMSLADVAPAWA) are cleaved as a signal peptide.

It belongs to the FlgI family. In terms of assembly, the basal body constitutes a major portion of the flagellar organelle and consists of four rings (L,P,S, and M) mounted on a central rod.

Its subcellular location is the periplasm. The protein resides in the bacterial flagellum basal body. Assembles around the rod to form the L-ring and probably protects the motor/basal body from shearing forces during rotation. In Rhizobium etli (strain CIAT 652), this protein is Flagellar P-ring protein.